The primary structure comprises 829 residues: Protein SEY1 (829 aa).

Residues 1 to 721 (MNQTPQIAQD…KRSMVSSVAQ (721 aa)) lie on the Cytoplasmic side of the membrane. Residues 87–310 (GFAYDVVAVF…REDYVFQPAY (224 aa)) enclose the GB1/RHD3-type G domain. 97 to 104 (GSQSTGKS) contributes to the GTP binding site. A coiled-coil region spans residues 487–525 (EYEHELALLDEDLKLIADKCRADETKKMVNAIERNVKRQ). The chain crosses the membrane as a helical span at residues 722–742 (IPVWMYGVLVVLGWNEAMAVL). The Lumenal portion of the chain corresponds to 743-745 (FNP). Residues 746–766 (LYFAMLLVLAASGYIILQLGL) traverse the membrane as a helical segment. The Cytoplasmic segment spans residues 767-829 (AGPILQIAST…DLIKGEMLEK (63 aa)). The tract at residues 806–829 (PVTASSSDEQERKGDLIKGEMLEK) is disordered. A compositionally biased stretch (basic and acidic residues) spans 814–829 (EQERKGDLIKGEMLEK).

Belongs to the TRAFAC class dynamin-like GTPase superfamily. GB1/RHD3 GTPase family. RHD3 subfamily.

It localises to the endoplasmic reticulum membrane. Cooperates with the reticulon proteins and tubule-shaping DP1 family proteins to generate and maintain the structure of the tubular endoplasmic reticulum network. Has GTPase activity, which is required for its function in ER organization. In Cryptococcus neoformans var. neoformans serotype D (strain B-3501A) (Filobasidiella neoformans), this protein is Protein SEY1.